Here is a 56-residue protein sequence, read N- to C-terminus: Large ribosomal subunit protein eL37 (56 aa).

Positions 19, 22, 34, and 37 each coordinate Zn(2+). A C4-type zinc finger spans residues 19–37; that stretch reads CRRCGSVSFNVHTKQCTSC.

The protein belongs to the eukaryotic ribosomal protein eL37 family. Requires Zn(2+) as cofactor.

Functionally, binds to the 23S rRNA. The polypeptide is Large ribosomal subunit protein eL37 (rpl37e) (Methanosarcina acetivorans (strain ATCC 35395 / DSM 2834 / JCM 12185 / C2A)).